Here is a 223-residue protein sequence, read N- to C-terminus: Chalcone--flavanone isomerase 2 (223 aa).

3 residues coordinate substrate: threonine 41, asparagine 106, and serine 183.

Belongs to the chalcone isomerase family.

It carries out the reaction a chalcone = a flavanone.. It functions in the pathway secondary metabolite biosynthesis; flavonoid biosynthesis. Its function is as follows. Catalyzes the intramolecular cyclization of bicyclic chalcones into tricyclic (S)-flavanones. Responsible for the isomerization of 4,2',4',6'-tetrahydroxychalcone (also termed chalcone) into naringenin. The chain is Chalcone--flavanone isomerase 2 (CHI2) from Arabidopsis thaliana (Mouse-ear cress).